Consider the following 202-residue polypeptide: Snake venom metalloproteinase atroxlysin-1 (202 aa).

A Peptidase M12B domain is found at 6–202; that stretch reads RYVDLFIVVD…ENPQCILNKR (197 aa). Ca(2+) is bound by residues aspartate 9 and aspartate 93. 3 cysteine pairs are disulfide-bonded: cysteine 117–cysteine 197, cysteine 157–cysteine 181, and cysteine 159–cysteine 164. Histidine 142 contacts Zn(2+). The active site involves glutamate 143. Positions 146 and 152 each coordinate Zn(2+). Cysteine 197 and asparagine 200 together coordinate Ca(2+).

This sequence belongs to the venom metalloproteinase (M12B) family. P-I subfamily. As to quaternary structure, monomer. The cofactor is Zn(2+). In terms of tissue distribution, expressed by the venom gland.

It localises to the secreted. Its activity is regulated as follows. Inhibited by EDTA, DTT and high concentrations of zinc ions (&gt;2 mM). Weakly inhibited by TLCK. Not inhibited by PMSF. Activated by calcium ions. In terms of biological role, snake venom zinc metalloproteinase that acts on fibrinogen, fibrin, fibronectin (FN1), type I collagen, type IV collagen, integrin alpha-7/beta-1 (ITGA7/ITGB1) and integrin alpha-1/beta-1 (ITGA1/ITGB1). Binds to fibronectin (FN1), fibrinogen and, weakly, to type I collagen and laminin. Cleaves Xaa-Leu bonds. Inhibits ADP- and collagen-induced platelet aggregation both in the presence (IC(50)=1.4 uM for collagen) and in the absence (IC(50)=2.2 uM for collagen) of cofactors. Has hemorrhagic activity. This Bothrops atrox (Barba amarilla) protein is Snake venom metalloproteinase atroxlysin-1.